Consider the following 239-residue polypeptide: Aspartate/glutamate leucyltransferase (239 aa).

The protein belongs to the R-transferase family. Bpt subfamily.

Its subcellular location is the cytoplasm. It catalyses the reaction N-terminal L-glutamyl-[protein] + L-leucyl-tRNA(Leu) = N-terminal L-leucyl-L-glutamyl-[protein] + tRNA(Leu) + H(+). The catalysed reaction is N-terminal L-aspartyl-[protein] + L-leucyl-tRNA(Leu) = N-terminal L-leucyl-L-aspartyl-[protein] + tRNA(Leu) + H(+). Functionally, functions in the N-end rule pathway of protein degradation where it conjugates Leu from its aminoacyl-tRNA to the N-termini of proteins containing an N-terminal aspartate or glutamate. The sequence is that of Aspartate/glutamate leucyltransferase from Campylobacter jejuni subsp. jejuni serotype O:2 (strain ATCC 700819 / NCTC 11168).